Reading from the N-terminus, the 82-residue chain is Small ribosomal subunit protein bS16 (82 aa).

This sequence belongs to the bacterial ribosomal protein bS16 family.

The sequence is that of Small ribosomal subunit protein bS16 from Tolumonas auensis (strain DSM 9187 / NBRC 110442 / TA 4).